Consider the following 267-residue polypeptide: Diphthine--ammonia ligase (267 aa).

Phosphotyrosine is present on Y97.

Belongs to the Diphthine--ammonia ligase family.

The catalysed reaction is diphthine-[translation elongation factor 2] + NH4(+) + ATP = diphthamide-[translation elongation factor 2] + AMP + diphosphate + H(+). It functions in the pathway protein modification; peptidyl-diphthamide biosynthesis. Functionally, amidase that catalyzes the last step of diphthamide biosynthesis using ammonium and ATP. Diphthamide biosynthesis consists in the conversion of an L-histidine residue in the translation elongation factor 2 (EEF2) to diphthamide. In Mus musculus (Mouse), this protein is Diphthine--ammonia ligase (Dph6).